Here is a 501-residue protein sequence, read N- to C-terminus: Neuronal acetylcholine receptor subunit beta-2 (501 aa).

Positions 1–25 (MARCSNSMALLFSFGLLWLCSGVLG) are cleaved as a signal peptide. Residues 26 to 238 (TDTEERLVEH…IIRRKPLFYT (213 aa)) are Extracellular-facing. N-linked (GlcNAc...) asparagine glycosylation is found at Asn-51 and Asn-168. Residues Cys-155 and Cys-169 are joined by a disulfide bond. Residues 239–259 (INLIIPCVLITSLAILVFYLP) traverse the membrane as a helical segment. Residues 260-267 (SDCGEKMT) are Cytoplasmic-facing. The helical transmembrane segment at 268-288 (LCISVLLALTVFLLLISKIVP) threads the bilayer. The Extracellular portion of the chain corresponds to 289–300 (PTSLDVPLVGKY). A helical transmembrane segment spans residues 301–321 (LMFTMVLVTFSIVTSVCVLNV). Residues 322–459 (HHRSPTTHTM…WKYVAMVIDR (138 aa)) are Cytoplasmic-facing. The helical transmembrane segment at 460 to 480 (LFLWIFVFVCVFGTIGMFLQP) threads the bilayer.

Belongs to the ligand-gated ion channel (TC 1.A.9) family. Acetylcholine receptor (TC 1.A.9.1) subfamily. Beta-2/CHRNB2 sub-subfamily. Neuronal AChR is a heteropentamer composed of two different types of subunits: alpha and beta. CHRNB2/Beta-2 subunit can be combined to CHRNA2/alpha-2, CHRNA3/alpha-3 or CHRNA4/alpha-4, CHRNA5/alpha-5, CHRNA6/alpha-6 and CHRNB3/beta-3 to give rise to functional receptors. CHRNA2:CHRNB2 and CHRNA4:CHRNB2 nAChR complexes exist in two subtypes: LS (low agonist sensitivity) with a (CHRNA2/4)3:(CHRNB2)2 and HS (high agonist sensitivity) with a (CHRNA2/4)2:(CHRNB2)3 stoichiometry; the subtypes differ in their subunit binding interfaces which are involved in ligand binding. Cells produce predominantly an (CHRNA4)3:(CHRNB2)2 nAChR. The stoichiometric form (CHRNA4)2:(CHRNB2)3 expression is selectively up-regulated by nicotine and has lower single channel conductance and calcium permeability. Also part of the stoichiometric forms: (CHRNA4:CHRNB2)2:CHRNB3 or (CHRNA6:CHRNB2)2:CHRNB3. Can form heteropentamers with CHRNA7, mainly found in basal forebrain cholinergic neurons. Interacts with RIC3; which is required for proper folding and assembly. Interacts with LYPD6.

Its subcellular location is the synaptic cell membrane. The protein resides in the cell membrane. The catalysed reaction is K(+)(in) = K(+)(out). It carries out the reaction Na(+)(in) = Na(+)(out). The enzyme catalyses Ca(2+)(in) = Ca(2+)(out). Activated by a myriad of ligands such as acetylcholine, cytisine, nicotine, choline and epibatidine. Channel potentiation by calcium is stoichiometry-selective, CHRNA4:CHRNB2 nACh receptor is achieved by calcium association with topographically distinct sites framed by anionic residues within the CHRNA4 subunit and between the CHRNA4 and CHRNB2 subunits. Oligomeric amyloid-beta protein 42 activates specifially CHRNA7:CHRNB2 nAchRs. nAChR activity is inhibited by the antagonist alpha-conotoxins BuIA, PnIA, PnIC, GID and MII, small disulfide-constrained peptides from cone snails. Component of neuronal acetylcholine receptors (nAChRs) that function as pentameric, ligand-gated cation channels with high calcium permeability among other activities. nAChRs are excitatory neurotrasnmitter receptors formed by a collection of nAChR subunits known to mediate synaptic transmission in the nervous system and the neuromuscular junction. Each nAchR subunit confers differential attributes to channel properties, including activation, deactivation and desensitization kinetics, pH sensitivity, cation permeability, and binding to allosteric modulators. CHRNB2 forms heteropentameric neuronal acetylcholine receptors with CHRNA2, CHRNA3, CHRNA4 and CHRNA6, as well as CHRNA5 and CHRNB3 as accesory subunits. Found in two major stoichiometric forms,(CHRNA4)3:(CHRNB2)2 and (CHRNA4)2:(CHRNB2)3, the two stoichiometric forms differ in their unitary conductance, calcium permeability, ACh sensitivity and potentiation by divalent cation. Heteropentameric channels with CHRNA6 and CHRNA4 exhibit high sensitivity to ACh and nicotine and are predominantly expressed in only a few brain areas, including dopaminergic neurons, norepirephrine neurons and cells of the visual system. nAChrs containing CHRNA6 subunits mediate endogenous cholinergic modulation of dopamine and gamma-aminobutyric acid (GABA) release in response to nicotine at nerve terminals. Also forms functional nAChRs with other subunits such as CHRNA7:CHRNB2, mainly expressed in basal forebrain cholinergic neurons. This Mus musculus (Mouse) protein is Neuronal acetylcholine receptor subunit beta-2 (Chrnb2).